We begin with the raw amino-acid sequence, 437 residues long: Ribosomal protein uS12 methylthiotransferase RimO (437 aa).

Residues 4–114 enclose the MTTase N-terminal domain; the sequence is PRISFVSLGC…VIEAVHTAIP (111 aa). Residues C13, C49, C78, C145, C149, and C152 each coordinate [4Fe-4S] cluster. Residues 131–369 form the Radical SAM core domain; sequence LTPRHYAYLK…MAKQQQISTH (239 aa). The 66-residue stretch at 372–437 folds into the TRAM domain; sequence KKKIGKRLQV…DAYDLYGIAV (66 aa).

This sequence belongs to the methylthiotransferase family. RimO subfamily. The cofactor is [4Fe-4S] cluster.

It is found in the cytoplasm. The catalysed reaction is L-aspartate(89)-[ribosomal protein uS12]-hydrogen + (sulfur carrier)-SH + AH2 + 2 S-adenosyl-L-methionine = 3-methylsulfanyl-L-aspartate(89)-[ribosomal protein uS12]-hydrogen + (sulfur carrier)-H + 5'-deoxyadenosine + L-methionine + A + S-adenosyl-L-homocysteine + 2 H(+). Functionally, catalyzes the methylthiolation of an aspartic acid residue of ribosomal protein uS12. The sequence is that of Ribosomal protein uS12 methylthiotransferase RimO from Bartonella tribocorum (strain CIP 105476 / IBS 506).